The chain runs to 201 residues: Imidazole glycerol phosphate synthase subunit HisH (201 aa).

The 201-residue stretch at 1 to 201 folds into the Glutamine amidotransferase type-1 domain; the sequence is MVFIADYGAG…LQVLRNFAEC (201 aa). Cys79 serves as the catalytic Nucleophile. Residues His183 and Glu185 contribute to the active site.

Heterodimer of HisH and HisF.

Its subcellular location is the cytoplasm. The catalysed reaction is 5-[(5-phospho-1-deoxy-D-ribulos-1-ylimino)methylamino]-1-(5-phospho-beta-D-ribosyl)imidazole-4-carboxamide + L-glutamine = D-erythro-1-(imidazol-4-yl)glycerol 3-phosphate + 5-amino-1-(5-phospho-beta-D-ribosyl)imidazole-4-carboxamide + L-glutamate + H(+). The enzyme catalyses L-glutamine + H2O = L-glutamate + NH4(+). It participates in amino-acid biosynthesis; L-histidine biosynthesis; L-histidine from 5-phospho-alpha-D-ribose 1-diphosphate: step 5/9. Its function is as follows. IGPS catalyzes the conversion of PRFAR and glutamine to IGP, AICAR and glutamate. The HisH subunit catalyzes the hydrolysis of glutamine to glutamate and ammonia as part of the synthesis of IGP and AICAR. The resulting ammonia molecule is channeled to the active site of HisF. The protein is Imidazole glycerol phosphate synthase subunit HisH of Chlorobium luteolum (strain DSM 273 / BCRC 81028 / 2530) (Pelodictyon luteolum).